We begin with the raw amino-acid sequence, 150 residues long: Transcriptional repressor NrdR (150 aa).

A zinc finger lies at 3 to 34; sequence CPFCNASDTKVVDTRASEDDKIVRRRRECISC. Residues 49 to 139 form the ATP-cone domain; sequence LTVVKKDKNR…VYREFTDVKS (91 aa).

It belongs to the NrdR family. It depends on Zn(2+) as a cofactor.

Negatively regulates transcription of bacterial ribonucleotide reductase nrd genes and operons by binding to NrdR-boxes. In Finegoldia magna (strain ATCC 29328 / DSM 20472 / WAL 2508) (Peptostreptococcus magnus), this protein is Transcriptional repressor NrdR.